The chain runs to 485 residues: Glycogen synthase (485 aa).

K15 serves as a coordination point for ADP-alpha-D-glucose.

Belongs to the glycosyltransferase 1 family. Bacterial/plant glycogen synthase subfamily.

The enzyme catalyses [(1-&gt;4)-alpha-D-glucosyl](n) + ADP-alpha-D-glucose = [(1-&gt;4)-alpha-D-glucosyl](n+1) + ADP + H(+). It functions in the pathway glycan biosynthesis; glycogen biosynthesis. Synthesizes alpha-1,4-glucan chains using ADP-glucose. The polypeptide is Glycogen synthase (Fervidobacterium nodosum (strain ATCC 35602 / DSM 5306 / Rt17-B1)).